The sequence spans 127 residues: MORF4 family-associated protein 1-like 1 (127 aa).

Residues 87–118 (GEADERVSELCEKAEEKAKEIAKMAEMLVELV) are a coiled coil.

It belongs to the MORF4 family-associated protein family.

In Homo sapiens (Human), this protein is MORF4 family-associated protein 1-like 1 (MRFAP1L1).